The following is a 624-amino-acid chain: Chaperone protein HtpG (624 aa).

An a; substrate-binding region spans residues 1–336 (MKGQETRGFQ…SNDLPLNVSR (336 aa)). The segment at 337 to 552 (EILQDSSITR…NDEMSTQMAK (216 aa)) is b. A c region spans residues 553 to 624 (LFAAAGQAVP…IRRMNQLLVS (72 aa)).

It belongs to the heat shock protein 90 family. As to quaternary structure, homodimer.

The protein localises to the cytoplasm. Molecular chaperone. Has ATPase activity. The sequence is that of Chaperone protein HtpG from Cronobacter sakazakii (strain ATCC BAA-894) (Enterobacter sakazakii).